Here is a 343-residue protein sequence, read N- to C-terminus: Mitochondrial distribution and morphology protein 34 (343 aa).

One can recognise an SMP-LTD domain in the interval 1–196 (MSFVFPSWST…LPGIIHRLSQ (196 aa)). Disordered regions lie at residues 227 to 255 (EVEEEENEENHGTSPGNEESFPPRHIGPG) and 300 to 325 (GAGTGSSGRASLASSSVGEGDIKAKR). Residues 306–317 (SGRASLASSSVG) show a composition bias toward low complexity.

The protein belongs to the MDM34 family. Component of the ER-mitochondria encounter structure (ERMES) or MDM complex, composed of MMM1, MDM10, MDM12 and MDM34.

Its subcellular location is the mitochondrion outer membrane. In terms of biological role, component of the ERMES/MDM complex, which serves as a molecular tether to connect the endoplasmic reticulum (ER) and mitochondria. Components of this complex are involved in the control of mitochondrial shape and protein biogenesis, and function in nonvesicular lipid trafficking between the ER and mitochondria. MDM34 is required for the interaction of the ER-resident membrane protein MMM1 and the outer mitochondrial membrane-resident beta-barrel protein MDM10. The polypeptide is Mitochondrial distribution and morphology protein 34 (Cryptococcus neoformans var. neoformans serotype D (strain B-3501A) (Filobasidiella neoformans)).